The following is a 185-amino-acid chain: Nucleoside triphosphate pyrophosphatase (185 aa).

The active-site Proton acceptor is the aspartate 70.

This sequence belongs to the Maf family. The cofactor is a divalent metal cation.

The protein resides in the cytoplasm. It catalyses the reaction a ribonucleoside 5'-triphosphate + H2O = a ribonucleoside 5'-phosphate + diphosphate + H(+). It carries out the reaction a 2'-deoxyribonucleoside 5'-triphosphate + H2O = a 2'-deoxyribonucleoside 5'-phosphate + diphosphate + H(+). Nucleoside triphosphate pyrophosphatase. May have a dual role in cell division arrest and in preventing the incorporation of modified nucleotides into cellular nucleic acids. This Nitratiruptor sp. (strain SB155-2) protein is Nucleoside triphosphate pyrophosphatase.